The sequence spans 506 residues: Tripartite terminase subunit 3 (506 aa).

The For ATPase activity role is filled by Glu-128. Catalysis depends on for nuclease activity residues Asp-282, Glu-354, and Asp-475.

Belongs to the herpesviridae TRM3 protein family. Interacts with the terminase subunits TRM1 and TRM2. Interacts with portal protein.

The protein localises to the host nucleus. Component of the molecular motor that translocates viral genomic DNA in empty capsid during DNA packaging. Forms a tripartite terminase complex together with TRM1 and TRM2 in the host cytoplasm. Once the complex reaches the host nucleus, it interacts with the capsid portal vertex. This portal forms a ring in which genomic DNA is translocated into the capsid. TRM3 carries an RNase H-like nuclease activity that plays an important role for the cleavage of concatemeric viral DNA into unit length genomes. This Amazona oratrix (yellow-headed parrot) protein is Tripartite terminase subunit 3.